The chain runs to 295 residues: Putative NADH-ubiquinone oxidoreductase MJ0520 (295 aa).

The next 8 membrane-spanning stretches (helical) occupy residues 8–28 (LIGAINLTIHAFLVGSLLLGL), 69–89 (LYIFVALLDIAIWLAALIIAI), 129–149 (VFSAAAEVPLFAVVAAIYLTT), 163–183 (IHGSLLFKMPICAFAFFILLV), 199–219 (IVSGYMTEHYGLLGAIIYIAE), 220–240 (AIAYFVLLWLFIAVFIGPLVI), 243–263 (PVLTLAVMVVMTVILAFVNGL), and 273–293 (VMLQMTIAGLVLCDVLYRLIV).

It belongs to the complex I subunit 1 family.

It is found in the cell membrane. It carries out the reaction a ubiquinone + NADH + 5 H(+)(in) = a ubiquinol + NAD(+) + 4 H(+)(out). In Methanocaldococcus jannaschii (strain ATCC 43067 / DSM 2661 / JAL-1 / JCM 10045 / NBRC 100440) (Methanococcus jannaschii), this protein is Putative NADH-ubiquinone oxidoreductase MJ0520.